Reading from the N-terminus, the 301-residue chain is Chitin deacetylase 1 (301 aa).

The N-terminal stretch at 1 to 24 (MKIFNTIQSVLFAAFFLKQGNCLA) is a signal peptide. Residues N26, N50, and N68 are each glycosylated (N-linked (GlcNAc...) asparagine). Cysteines 107 and 290 form a disulfide. The region spanning 108–288 (FKLSQTFDDG…LIGSDQLTIA (181 aa)) is the NodB homology domain. The active-site Proton acceptor is D115. D115 contributes to the acetate binding site. 3 residues coordinate Co(2+): D116, H162, and H166. An N-linked (GlcNAc...) asparagine glycan is attached at N189. Y203 lines the acetate pocket. Residue H263 is the Proton donor of the active site.

It belongs to the polysaccharide deacetylase family. Co(2+) serves as cofactor.

Its subcellular location is the prospore. The catalysed reaction is [(1-&gt;4)-N-acetyl-beta-D-glucosaminyl](n) + n H2O = chitosan + n acetate. Functionally, hydrolyzes the N-acetamido groups of N-acetyl-D-glucosamine residues in chitin to form chitosan and acetate. Chitosan is a component of the spore wall. The polypeptide is Chitin deacetylase 1 (Saccharomyces cerevisiae (strain ATCC 204508 / S288c) (Baker's yeast)).